Reading from the N-terminus, the 553-residue chain is MNPEDLSVLIKNTAAAVLTEHELDASVLPETVTVERPRNPEHGDYATNLALQVAKKAGAQPRELAQWLADALAGNDAIDEASIAGPGFLNIRLAAAAQGAIVAQVLNAGADFGSNTTYQGKKINLEFVSANPTGPIHLGGTRWAAVGDSLGRVLEASGAEVTREYYFNDHGGQIDRFARSLVAAAKGEPTPEDGYGGGYIKEIAQGVLEQNPGALDGSDAEVQEAFRSAGVEMMFAQIKESLHEFGVDFDVYFHENSLFESGAVEKSIQKLKDNGKLYEAEGAWWLKSTEYGDDKDRVVIKSDGNAAYIAGDIAYVADKFDRGHDLAIYMLGADHHGYIARLRASAQALGYDPDAVEVLIGQMVNLVRDGKAVKMSKRAGTVITLDDLVEAIGVDGARYSLVRSSVDSSLDIDLGLWASQSADNPVYYVQYGHARICSILRKAAELGFDTAALADAPLDLLTHDKEGDLIRTLGEFPEVVATAATLREPHRIARYAEELAAVFHRFYDQCQVLPKAGEETEPIHSARLALASATRQVMSNALTTVGVSAPEKM.

The 'HIGH' region signature appears at 130 to 140 (ANPTGPIHLGG).

It belongs to the class-I aminoacyl-tRNA synthetase family. Monomer.

It localises to the cytoplasm. It carries out the reaction tRNA(Arg) + L-arginine + ATP = L-arginyl-tRNA(Arg) + AMP + diphosphate. The protein is Arginine--tRNA ligase of Corynebacterium aurimucosum (strain ATCC 700975 / DSM 44827 / CIP 107346 / CN-1) (Corynebacterium nigricans).